Consider the following 705-residue polypeptide: Elongation factor G (705 aa).

Residues glutamate 8–alanine 290 form the tr-type G domain. GTP contacts are provided by residues alanine 17–threonine 24, aspartate 88–histidine 92, and asparagine 142–aspartate 145. The segment at alanine 290 to alanine 309 is disordered.

It belongs to the TRAFAC class translation factor GTPase superfamily. Classic translation factor GTPase family. EF-G/EF-2 subfamily.

The protein localises to the cytoplasm. Its function is as follows. Catalyzes the GTP-dependent ribosomal translocation step during translation elongation. During this step, the ribosome changes from the pre-translocational (PRE) to the post-translocational (POST) state as the newly formed A-site-bound peptidyl-tRNA and P-site-bound deacylated tRNA move to the P and E sites, respectively. Catalyzes the coordinated movement of the two tRNA molecules, the mRNA and conformational changes in the ribosome. The protein is Elongation factor G of Xanthomonas oryzae pv. oryzae (strain MAFF 311018).